The following is a 366-amino-acid chain: UDP-N-acetylglucosamine--N-acetylmuramyl-(pentapeptide) pyrophosphoryl-undecaprenol N-acetylglucosamine transferase (366 aa).

UDP-N-acetyl-alpha-D-glucosamine is bound by residues T14–G16, N125, R168, S196, and Q297.

The protein belongs to the glycosyltransferase 28 family. MurG subfamily.

The protein resides in the cell inner membrane. It carries out the reaction di-trans,octa-cis-undecaprenyl diphospho-N-acetyl-alpha-D-muramoyl-L-alanyl-D-glutamyl-meso-2,6-diaminopimeloyl-D-alanyl-D-alanine + UDP-N-acetyl-alpha-D-glucosamine = di-trans,octa-cis-undecaprenyl diphospho-[N-acetyl-alpha-D-glucosaminyl-(1-&gt;4)]-N-acetyl-alpha-D-muramoyl-L-alanyl-D-glutamyl-meso-2,6-diaminopimeloyl-D-alanyl-D-alanine + UDP + H(+). Its pathway is cell wall biogenesis; peptidoglycan biosynthesis. Its function is as follows. Cell wall formation. Catalyzes the transfer of a GlcNAc subunit on undecaprenyl-pyrophosphoryl-MurNAc-pentapeptide (lipid intermediate I) to form undecaprenyl-pyrophosphoryl-MurNAc-(pentapeptide)GlcNAc (lipid intermediate II). The chain is UDP-N-acetylglucosamine--N-acetylmuramyl-(pentapeptide) pyrophosphoryl-undecaprenol N-acetylglucosamine transferase from Rhodopseudomonas palustris (strain ATCC BAA-98 / CGA009).